A 362-amino-acid polypeptide reads, in one-letter code: tRNA/tmRNA (uracil-C(5))-methyltransferase (362 aa).

Residues Gln-182, Tyr-210, Asn-215, Glu-231, and Asp-293 each contribute to the S-adenosyl-L-methionine site. Cys-318 functions as the Nucleophile in the catalytic mechanism. Glu-352 acts as the Proton acceptor in catalysis.

It belongs to the class I-like SAM-binding methyltransferase superfamily. RNA M5U methyltransferase family. TrmA subfamily.

The catalysed reaction is uridine(54) in tRNA + S-adenosyl-L-methionine = 5-methyluridine(54) in tRNA + S-adenosyl-L-homocysteine + H(+). It catalyses the reaction uridine(341) in tmRNA + S-adenosyl-L-methionine = 5-methyluridine(341) in tmRNA + S-adenosyl-L-homocysteine + H(+). Dual-specificity methyltransferase that catalyzes the formation of 5-methyluridine at position 54 (m5U54) in all tRNAs, and that of position 341 (m5U341) in tmRNA (transfer-mRNA). This chain is tRNA/tmRNA (uracil-C(5))-methyltransferase, found in Neisseria gonorrhoeae (strain ATCC 700825 / FA 1090).